A 149-amino-acid chain; its full sequence is MKPRHKKMAVIALSVSALTVAVVLVLNAFQSNLVFFFSPSQVAAKEAPIGKSFRIGGLVEEGSLKREGDGTTLNFAITDTAEVIRVVYTGILPDLFKEGKGVVAQGKMADDGIFYADEVLAKHDENYMPPEAASALEQAAKAQKTSLAQ.

The Cytoplasmic segment spans residues Met1–Lys7. Residues Met8–Ala28 form a helical; Signal-anchor for type II membrane protein membrane-spanning segment. Residues Phe29–Gln149 lie on the Periplasmic side of the membrane. Positions 123 and 127 each coordinate heme.

It belongs to the CcmE/CycJ family.

It localises to the cell inner membrane. In terms of biological role, heme chaperone required for the biogenesis of c-type cytochromes. Transiently binds heme delivered by CcmC and transfers the heme to apo-cytochromes in a process facilitated by CcmF and CcmH. The chain is Cytochrome c-type biogenesis protein CcmE from Nitrosomonas europaea (strain ATCC 19718 / CIP 103999 / KCTC 2705 / NBRC 14298).